The sequence spans 473 residues: Methionine aminopeptidase 2 (473 aa).

Residues 23–121 (LAEDSSNGTQ…KLVSIDQSYP (99 aa)) form a disordered region. The segment covering 41–53 (KATTAVGQDNGNN) has biased composition (polar residues). Over residues 73–83 (DDDDDDEDDDV) the composition is skewed to acidic residues. The span at 84 to 93 (AAAAAAVGDA) shows a compositional bias: low complexity. Basic residues predominate over residues 97–113 (KKKKKKKSSNKKKKKKL). H224 serves as a coordination point for substrate. D244, D255, and H326 together coordinate a divalent metal cation. Position 334 (H334) interacts with substrate. Residues E359 and E454 each coordinate a divalent metal cation.

This sequence belongs to the peptidase M24A family. Methionine aminopeptidase eukaryotic type 2 subfamily. It depends on Co(2+) as a cofactor. The cofactor is Zn(2+). Mn(2+) is required as a cofactor. Requires Fe(2+) as cofactor.

The protein localises to the cytoplasm. The enzyme catalyses Release of N-terminal amino acids, preferentially methionine, from peptides and arylamides.. Its function is as follows. Cotranslationally removes the N-terminal methionine from nascent proteins. The N-terminal methionine is often cleaved when the second residue in the primary sequence is small and uncharged (Met-Ala-, Cys, Gly, Pro, Ser, Thr, or Val). In Lodderomyces elongisporus (strain ATCC 11503 / CBS 2605 / JCM 1781 / NBRC 1676 / NRRL YB-4239) (Yeast), this protein is Methionine aminopeptidase 2.